Reading from the N-terminus, the 121-residue chain is Large ribosomal subunit protein uL14 (121 aa).

It belongs to the universal ribosomal protein uL14 family. In terms of assembly, part of the 50S ribosomal subunit. Forms a cluster with proteins L3 and L19. In the 70S ribosome, L14 and L19 interact and together make contacts with the 16S rRNA in bridges B5 and B8.

In terms of biological role, binds to 23S rRNA. Forms part of two intersubunit bridges in the 70S ribosome. This Prochlorococcus marinus (strain MIT 9211) protein is Large ribosomal subunit protein uL14.